Here is a 1475-residue protein sequence, read N- to C-terminus: Alpha-glucan water dikinase, chloroplastic (1475 aa).

The N-terminal 85 residues, 1–85, are a transit peptide targeting the chloroplast; it reads MSNSIGRNVL…HRPVLITPRA (85 aa). H1077 (tele-phosphohistidine intermediate) is an active-site residue.

Belongs to the PEP-utilizing enzyme family. Homodimer. Mg(2+) serves as cofactor.

The protein localises to the plastid. It localises to the chloroplast. The enzyme catalyses [(1-&gt;4)-alpha-D-glucosyl](n) + n ATP + n H2O = [(1-&gt;4)-6-phospho-alpha-D-glucosyl](n) + n AMP + n phosphate + 2n H(+). In terms of biological role, mediates the incorporation of phosphate into starch-like alpha-glucan, mostly at the C-6 position of glucose units. Acts as an overall regulator of starch mobilization. Required for starch degradation, suggesting that the phosphate content of starch regulates its degradability. The chain is Alpha-glucan water dikinase, chloroplastic (R1) from Citrus reticulata (Tangerine).